The sequence spans 396 residues: Calreticulin (396 aa).

A signal peptide spans 1–15; sequence MKSLCLLAIVAVVSA. C101 and C133 form a disulfide bridge. Residues Y105, K107, Y124, and D131 each contribute to the an alpha-D-glucoside site. A run of 7 repeats spans residues 186–197, 205–216, 222–233, 239–250, 254–264, 268–278, and 282–292. The 4 X approximate repeats stretch occupies residues 186 to 250; it reads AQTGSLEEDW…DAKKPEDWDD (65 aa). The P-domain stretch occupies residues 193–301; the sequence is EDWDLLPAKK…PEYTPDDELY (109 aa). A compositionally biased stretch (basic and acidic residues) spans 202–212; that stretch reads KIKDPDAKKPE. The segment at 202–250 is disordered; sequence KIKDPDAKKPEDWDEREYIDDAEDVKPEDWEKPEHIPDPDAKKPEDWDD. Residues 213-224 show a composition bias toward acidic residues; that stretch reads DWDEREYIDDAE. A compositionally biased stretch (basic and acidic residues) spans 225-246; sequence DVKPEDWEKPEHIPDPDAKKPE. A 3 X approximate repeats region spans residues 254–292; the sequence is GEWEPPMIDNPEYKGEWKPKQIKNPAYKGKWIHPEIENP. Residues 302–396 are C-domain; that stretch reads LYENWGAIGF…KEEEEGHDEL (95 aa). Residue D312 participates in an alpha-D-glucoside binding. Residues 342 to 380 show a composition bias toward basic and acidic residues; sequence FDKLKTVEKEKKEKADEEARKVEEEARKKAEEEKEAKKD. The segment at 342–396 is disordered; that stretch reads FDKLKTVEKEKKEKADEEARKVEEEARKKAEEEKEAKKDDDEEEEKEEEEGHDEL. A compositionally biased stretch (acidic residues) spans 381 to 396; it reads DDEEEEKEEEEGHDEL. The Prevents secretion from ER motif lies at 393-396; it reads HDEL.

The protein belongs to the calreticulin family.

It is found in the endoplasmic reticulum lumen. Molecular calcium-binding chaperone promoting folding, oligomeric assembly and quality control in the ER via the calreticulin/calnexin cycle. This lectin may interact transiently with almost all of the monoglucosylated glycoproteins that are synthesized in the ER. Probably by controlling the folding of extracellular matrix protein unc-52/Perlecan, may play a role in the formation of fibrous organelles, a hemidesmosome-like structure attaching muscles to the epidermis. Protects dopaminergic neurons against oxidative stress-induced neurodegeneration. This Caenorhabditis briggsae protein is Calreticulin (crt-1).